The primary structure comprises 462 residues: Arginine biosynthesis bifunctional protein ArgJ, mitochondrial (462 aa).

Positions 189, 215, 236, 327, 457, and 462 each coordinate substrate. The Nucleophile role is filled by threonine 236.

This sequence belongs to the ArgJ family. In terms of assembly, heterodimer of an alpha and a beta chain. Post-translationally, the alpha and beta chains are autoproteolytically processed from a single precursor protein within the mitochondrion.

It is found in the mitochondrion matrix. The catalysed reaction is N(2)-acetyl-L-ornithine + L-glutamate = N-acetyl-L-glutamate + L-ornithine. It catalyses the reaction L-glutamate + acetyl-CoA = N-acetyl-L-glutamate + CoA + H(+). It participates in amino-acid biosynthesis; L-arginine biosynthesis; L-ornithine and N-acetyl-L-glutamate from L-glutamate and N(2)-acetyl-L-ornithine (cyclic): step 1/1. It functions in the pathway amino-acid biosynthesis; L-arginine biosynthesis; N(2)-acetyl-L-ornithine from L-glutamate: step 1/4. In terms of biological role, catalyzes two activities which are involved in the cyclic version of arginine biosynthesis: the synthesis of acetylglutamate from glutamate and acetyl-CoA, and of ornithine by transacetylation between acetylornithine and glutamate. The chain is Arginine biosynthesis bifunctional protein ArgJ, mitochondrial from Postia placenta (strain ATCC 44394 / Madison 698-R) (Brown rot fungus).